Here is a 218-residue protein sequence, read N- to C-terminus: Probable nicotinate-nucleotide adenylyltransferase (218 aa).

Belongs to the NadD family.

It catalyses the reaction nicotinate beta-D-ribonucleotide + ATP + H(+) = deamido-NAD(+) + diphosphate. Its pathway is cofactor biosynthesis; NAD(+) biosynthesis; deamido-NAD(+) from nicotinate D-ribonucleotide: step 1/1. Its function is as follows. Catalyzes the reversible adenylation of nicotinate mononucleotide (NaMN) to nicotinic acid adenine dinucleotide (NaAD). The polypeptide is Probable nicotinate-nucleotide adenylyltransferase (Halorhodospira halophila (strain DSM 244 / SL1) (Ectothiorhodospira halophila (strain DSM 244 / SL1))).